Reading from the N-terminus, the 141-residue chain is NGSIMGALYKGLIATGLLSIVGLGVANTLTVGWGEIGTVAGKSITGTNLFVCGLIGLIVTGLIVVITEYYTGTNKRPVNSXAQASVTGHGTNVIQGLAVSLESTALPAIVIVGGIIXTYQLAGLFGTAIAVTAMLGIAGMI.

Transmembrane regions (helical) follow at residues 11–31 (GLIATGLLSIVGLGVANTLTV), 46–66 (GTNLFVCGLIGLIVTGLIVVI), and 121–141 (LAGLFGTAIAVTAMLGIAGMI).

The protein belongs to the H(+)-translocating pyrophosphatase (TC 3.A.10) family. As to quaternary structure, homodimer. The cofactor is Mg(2+).

The protein resides in the cell inner membrane. It catalyses the reaction diphosphate + H2O + H(+)(in) = 2 phosphate + 2 H(+)(out). Functionally, proton pump that utilizes the energy of pyrophosphate hydrolysis as the driving force for proton movement across the membrane. Generates a proton motive force. The chain is Pyrophosphate-energized proton pump (hppA) from Anaplasma marginale.